The primary structure comprises 470 residues: MEKAHADEFPLTTDSSEKQGVVCIFGTGDFGKSLGLKMLQCGYSIVFGSRNPQVSSLLPRGAEVLSYSEAASKSDIIILAMHREHYDSLTELVDYLKGKVLVDVSNNRKINQYPESNAEYLAQLEPGAHVVKAFNTISAWALQSGTLDASRQVFVCGNDSKAKQRVMDIARTLGLTPLDQGSLMAASEIENYPLQLFPMWRFPFYLSSVLCVFFFVYCAIREVIYPYVNGKTDATYRLAISIPNRVFPITALILLALVYLPGILAAILQLYRGTKYRRFPNWLDHWMLCRKQLGLVALGFAFLHVIYTLVIPIRYYVRWRLRNATITQALTNKDSPFITSYAWINDSYLALGILGFFLFLLLGITSLPSVSNMVNWREFRFVQSKLGYLTLVLCTAHTLVYGGKRFLSPSILRWSLPSAYILALVIPCAVLVLKCILIMPCIDKTLTRIRQGWERNSKYTQSALNGKSDI.

NADP(+) contacts are provided by residues 27 to 30, 49 to 50, Tyr67, 81 to 85, Asn106, and Ala139; these read TGDF, SR, and MHREH. Trp140 and Asp148 together coordinate FAD. Arg171 contacts NADP(+). Transmembrane regions (helical) follow at residues 202-224 and 236-256; these read FPFYLSSVLCVFFFVYCAIREVI and YRLAISIPNRVFPITALILLA. Fe(3+) is bound at residue Tyr217. The 149-residue stretch at 247–395 folds into the Ferric oxidoreductase domain; the sequence is FPITALILLA…LGYLTLVLCT (149 aa). Gln269 and Arg290 together coordinate FAD. A run of 2 helical transmembrane segments spans residues 293 to 313 and 342 to 362; these read LGLVALGFAFLHVIYTLVIPI and AWINDSYLALGILGFFLFLLL. His304 is a binding site for heme b. Residue Tyr307 participates in Fe(3+) binding. FAD-binding residues include Ser366 and Gln383. 2 helical membrane-spanning segments follow: residues 381-401 and 419-439; these read FVQSKLGYLTLVLCTAHTLVY and AYILALVIPCAVLVLKCILIM. His397 provides a ligand contact to heme b.

Belongs to the STEAP family. Homotrimer. Interacts with PTK2/FAK1; the interaction may regulate PTK2 phosphorylation. FAD serves as cofactor. Requires heme b as cofactor. In terms of tissue distribution, expressed in white and brown adipose tissues cells, as well as in muscle and liver cells. Detected in joints and spleens of arthritic mice.

It is found in the cell membrane. The protein resides in the golgi apparatus membrane. The protein localises to the early endosome membrane. It catalyses the reaction 2 Fe(2+) + NADP(+) + H(+) = 2 Fe(3+) + NADPH. The catalysed reaction is 2 Cu(+) + NADP(+) + H(+) = 2 Cu(2+) + NADPH. Functionally, integral membrane protein that functions as a NADPH-dependent ferric-chelate reductase, using NADPH from one side of the membrane to reduce a Fe(3+) chelate that is bound on the other side of the membrane. Mediates sequential transmembrane electron transfer from NADPH to FAD and onto heme, and finally to the Fe(3+) chelate. Can also reduce Cu(2+) to Cu(1+). Plays a role in systemic metabolic homeostasis, integrating inflammatory and metabolic responses. Associated with obesity and insulin-resistance. Involved in inflammatory arthritis, through the regulation of inflammatory cytokines. Inhibits anchorage-independent cell proliferation. In Mus musculus (Mouse), this protein is Metalloreductase STEAP4 (Steap4).